Reading from the N-terminus, the 144-residue chain is Large ribosomal subunit protein uL13 (144 aa).

It belongs to the universal ribosomal protein uL13 family. In terms of assembly, part of the 50S ribosomal subunit.

This protein is one of the early assembly proteins of the 50S ribosomal subunit, although it is not seen to bind rRNA by itself. It is important during the early stages of 50S assembly. This chain is Large ribosomal subunit protein uL13, found in Magnetococcus marinus (strain ATCC BAA-1437 / JCM 17883 / MC-1).